We begin with the raw amino-acid sequence, 91 residues long: Small ribosomal subunit protein uS19 (91 aa).

The protein belongs to the universal ribosomal protein uS19 family.

In terms of biological role, protein S19 forms a complex with S13 that binds strongly to the 16S ribosomal RNA. The protein is Small ribosomal subunit protein uS19 of Parasynechococcus marenigrum (strain WH8102).